The chain runs to 85 residues: MKVTLIAILTCAAVLVLHTTAAEELEAESQLMEVGMPDTELAAVDEERLFECSVSCEIEKEDNKDCKKKKCKGGWKCKFNMCVKV.

An N-terminal signal peptide occupies residues 1–22 (MKVTLIAILTCAAVLVLHTTAA). A propeptide spanning residues 23 to 48 (EELEAESQLMEVGMPDTELAAVDEER) is cleaved from the precursor. 3 disulfide bridges follow: C52/C66, C56/C77, and C71/C82.

The protein belongs to the neurotoxin 12 (Hwtx-2) family. 02 (Hwtx-2) subfamily. Expressed by the venom gland.

It localises to the secreted. Its function is as follows. Postsynaptic neurotoxin. The protein is U4-theraphotoxin-Hhn1g of Cyriopagopus hainanus (Chinese bird spider).